The sequence spans 284 residues: Homeobox protein six1b (284 aa).

Positions 124–183 form a DNA-binding region, homeobox; the sequence is GEETSYCFKEKSRGVLREWYTHNPYPSPREKRELAEATGLTTTQVSNWFKNRRQRDRAAE. The disordered stretch occupies residues 167 to 238; the sequence is QVSNWFKNRR…NSVLLLQGNM (72 aa). Basic and acidic residues predominate over residues 179–190; that stretch reads DRAAEAKERENS. Polar residues-rich tracts occupy residues 191 to 204 and 226 to 238; these read ENNN…NQLS and PDQN…QGNM.

The protein belongs to the SIX/Sine oculis homeobox family. In terms of assembly, interacts with eya1.

The protein resides in the nucleus. Its subcellular location is the cytoplasm. Transcription factor that is involved in the regulation of cell proliferation, apoptosis and embryonic development. Depending on context, functions as a transcriptional repressor or activator. Transcriptional activation is enhanced by eya1 (in vitro). Plays an important role in the development of the inner ear, where it promotes hair cell proliferation and inhibits proliferation of neural progenitor cells. Required for normal myogenesis. Plays a role in the development of fast muscle fibers throughout the body, as well as the development of craniofacial muscles. Required for normal expression of myod1 and myog during myogenesis. This Danio rerio (Zebrafish) protein is Homeobox protein six1b (six1b).